A 278-amino-acid chain; its full sequence is Shikimate dehydrogenase (NADP(+)) (278 aa).

Shikimate-binding positions include 19–21 and T66; that span reads SRS. K70 (proton acceptor) is an active-site residue. Residues N91 and D106 each coordinate shikimate. NADP(+)-binding positions include 129-133 and F221; that span reads GAGGA. Y223 serves as a coordination point for shikimate. NADP(+) is bound at residue G242.

This sequence belongs to the shikimate dehydrogenase family. Homodimer.

It carries out the reaction shikimate + NADP(+) = 3-dehydroshikimate + NADPH + H(+). The protein operates within metabolic intermediate biosynthesis; chorismate biosynthesis; chorismate from D-erythrose 4-phosphate and phosphoenolpyruvate: step 4/7. Its function is as follows. Involved in the biosynthesis of the chorismate, which leads to the biosynthesis of aromatic amino acids. Catalyzes the reversible NADPH linked reduction of 3-dehydroshikimate (DHSA) to yield shikimate (SA). This Anaeromyxobacter dehalogenans (strain 2CP-1 / ATCC BAA-258) protein is Shikimate dehydrogenase (NADP(+)).